Here is a 166-residue protein sequence, read N- to C-terminus: Transcriptional repressor NrdR (166 aa).

Residues 3 to 34 fold into a zinc finger; it reads CIKCGNMEDKVIDSRPIKEGKSIRRRRECLRC. One can recognise an ATP-cone domain in the interval 49–139; it reads LFVKKRNGSI…VYCKFHDAKD (91 aa).

The protein belongs to the NrdR family. The cofactor is Zn(2+).

Negatively regulates transcription of bacterial ribonucleotide reductase nrd genes and operons by binding to NrdR-boxes. In Methylacidiphilum infernorum (isolate V4) (Methylokorus infernorum (strain V4)), this protein is Transcriptional repressor NrdR.